We begin with the raw amino-acid sequence, 436 residues long: UPF0597 protein YhaM (436 aa).

The protein belongs to the UPF0597 family.

The polypeptide is UPF0597 protein YhaM (Salmonella dublin (strain CT_02021853)).